The primary structure comprises 336 residues: Phosphate acyltransferase (336 aa).

This sequence belongs to the PlsX family. In terms of assembly, homodimer. Probably interacts with PlsY.

The protein localises to the cytoplasm. It catalyses the reaction a fatty acyl-[ACP] + phosphate = an acyl phosphate + holo-[ACP]. It functions in the pathway lipid metabolism; phospholipid metabolism. Its function is as follows. Catalyzes the reversible formation of acyl-phosphate (acyl-PO(4)) from acyl-[acyl-carrier-protein] (acyl-ACP). This enzyme utilizes acyl-ACP as fatty acyl donor, but not acyl-CoA. The protein is Phosphate acyltransferase of Pseudomonas paraeruginosa (strain DSM 24068 / PA7) (Pseudomonas aeruginosa (strain PA7)).